A 279-amino-acid polypeptide reads, in one-letter code: tRNA dimethylallyltransferase (279 aa).

Gly-10–Ser-17 serves as a coordination point for ATP. Position 12-17 (Thr-12–Ser-17) interacts with substrate.

This sequence belongs to the IPP transferase family. Monomer. It depends on Mg(2+) as a cofactor.

The enzyme catalyses adenosine(37) in tRNA + dimethylallyl diphosphate = N(6)-dimethylallyladenosine(37) in tRNA + diphosphate. In terms of biological role, catalyzes the transfer of a dimethylallyl group onto the adenine at position 37 in tRNAs that read codons beginning with uridine, leading to the formation of N6-(dimethylallyl)adenosine (i(6)A). This Roseobacter denitrificans (strain ATCC 33942 / OCh 114) (Erythrobacter sp. (strain OCh 114)) protein is tRNA dimethylallyltransferase.